A 137-amino-acid polypeptide reads, in one-letter code: Beta-synuclein (137 aa).

A run of 2 repeats spans residues 20–30 and 31–41. Residues 20-67 form a 4 X 11 AA tandem repeats of [EGS]-K-T-K-[EQ]-[GQ]-V-X(4) region; sequence EKTKQGVTEAAEKTKEGVLYVGSKTKEGVVQGVASVAEKTKEQASHLG. The stretch at 42–56 is one 3; approximate repeat; it reads SKTKEGVVQGVASVA. Repeat 4 spans residues 57–67; it reads EKTKEQASHLG. Residues 88 to 97 are compositionally biased toward basic and acidic residues; sequence EFPTDLKPEE. The tract at residues 88–137 is disordered; sequence EFPTDLKPEEVAQEAAEEPLIEPLMEPEGESYEDSPQEEYQEYEPEAKGP. Over residues 98–131 the composition is skewed to acidic residues; it reads VAQEAAEEPLIEPLMEPEGESYEDSPQEEYQEYE. Phosphoserine; by BARK1, CK2 and GRK5 is present on Ser-118.

This sequence belongs to the synuclein family. Phosphorylated. Phosphorylation by G-protein coupled receptor kinases (GRK) is more efficient than phosphorylation by CK1, CK2 and CaM-kinase II. Expressed specifically in brain.

The protein resides in the cytoplasm. May be involved in neuronal plasticity. The protein is Beta-synuclein (Sncb) of Rattus norvegicus (Rat).